A 187-amino-acid chain; its full sequence is Abscisic acid receptor PYL9 (187 aa).

The interval 27–178 is START-like; that stretch reads HLCRENQCTS…NLKSLADVSE (152 aa). Cystine bridges form between Cys-29/Cys-159 and Cys-34/Cys-159. Abscisate-binding positions include Lys-63, 91-96, 118-124, and Glu-143; these read ATTSTE and RLKNYSS. Residues 87-91 carry the Gate loop motif; the sequence is SGLPA. The Latch loop signature appears at 117 to 119; the sequence is HRL.

This sequence belongs to the PYR/PYL/RCAR abscisic acid intracellular receptor family. As to quaternary structure, homodimer. Monomer. Binds ABA on one subunit only. Binds to CARs protein in an ABA-independent manner, both at the plasma membrane and in the nucleus. Binds specifically (+)-ABA but not (-)-ABA. Interacts with HAB1, ABI1 and ABI2, and possibly with other PP2Cs. Interacts with TOPP1. Interacts with DDA1. As to expression, expressed in root tips, vascular tissues, stomata, flowers, pollen tubes and developing seeds.

It localises to the cytoplasm. It is found in the nucleus. The protein resides in the cell membrane. Functionally, receptor for abscisic acid (ABA) required for ABA-mediated responses such as stomatal closure and germination inhibition. Inhibits the activity of group-A protein phosphatases type 2C (PP2Cs) in an ABA-independent manner but more efficiently when activated by ABA. Confers enhanced sensitivity to ABA. Can be activated only by (+)-ABA but not by (-)-ABA. The chain is Abscisic acid receptor PYL9 (PYL9) from Arabidopsis thaliana (Mouse-ear cress).